The following is a 183-amino-acid chain: ATP-dependent protease subunit HslV (183 aa).

The active site involves T13. The Na(+) site is built by G168, C171, and T174.

It belongs to the peptidase T1B family. HslV subfamily. As to quaternary structure, a double ring-shaped homohexamer of HslV is capped on each side by a ring-shaped HslU homohexamer. The assembly of the HslU/HslV complex is dependent on binding of ATP.

The protein localises to the cytoplasm. It carries out the reaction ATP-dependent cleavage of peptide bonds with broad specificity.. With respect to regulation, allosterically activated by HslU binding. Its function is as follows. Protease subunit of a proteasome-like degradation complex believed to be a general protein degrading machinery. The chain is ATP-dependent protease subunit HslV from Stenotrophomonas maltophilia (strain R551-3).